The primary structure comprises 212 residues: Regulator of G-protein signaling 2 (212 aa).

Disordered regions lie at residues 11–33 (HDCG…REKM) and 48–69 (FLQN…PQTF). The tract at residues 32–66 (KMKRTLLKDWKTRLSYFLQNSSSPGKPKTGKKSKP) is necessary for membrane association. The necessary to inhibit protein synthesis stretch occupies residues 79-116 (LWAEAFDELLASKYGLAAFRAFLKSEFCEENIEFWLAC). The region spanning 83–199 (AFDELLASKY…LESEFYQDLC (117 aa)) is the RGS domain.

As to quaternary structure, interacts with GNAQ. Does not interact with GNAI1 and GNAI3. Interacts with EIF2B5. Interacts with PRKG1 (isoform alpha). In terms of processing, phosphorylated by protein kinase C. Phosphorylation by PRKG1 leads to activation of RGS2 activity.

It localises to the cell membrane. The protein localises to the cytoplasm. Its subcellular location is the nucleus. The protein resides in the nucleolus. In terms of biological role, regulates G protein-coupled receptor signaling cascades. Inhibits signal transduction by increasing the GTPase activity of G protein alpha subunits, thereby driving them into their inactive GDP-bound form. It is involved in the negative regulation of the angiotensin-activated signaling pathway. Plays a role in the regulation of blood pressure in response to signaling via G protein-coupled receptors and GNAQ. Plays a role in regulating the constriction and relaxation of vascular smooth muscle. Binds EIF2B5 and blocks its activity, thereby inhibiting the translation of mRNA into protein. The protein is Regulator of G-protein signaling 2 (RGS2) of Sus scrofa (Pig).